We begin with the raw amino-acid sequence, 935 residues long: Isoleucine--tRNA ligase (935 aa).

The short motif at 58–68 (PYANGSIHVGH) is the 'HIGH' region element. Position 558 (glutamate 558) interacts with L-isoleucyl-5'-AMP. A 'KMSKS' region motif is present at residues 599 to 603 (KMSKS). Lysine 602 provides a ligand contact to ATP. Zn(2+) contacts are provided by cysteine 897, cysteine 900, cysteine 917, and cysteine 920.

The protein belongs to the class-I aminoacyl-tRNA synthetase family. IleS type 1 subfamily. As to quaternary structure, monomer. It depends on Zn(2+) as a cofactor.

It is found in the cytoplasm. The enzyme catalyses tRNA(Ile) + L-isoleucine + ATP = L-isoleucyl-tRNA(Ile) + AMP + diphosphate. In terms of biological role, catalyzes the attachment of isoleucine to tRNA(Ile). As IleRS can inadvertently accommodate and process structurally similar amino acids such as valine, to avoid such errors it has two additional distinct tRNA(Ile)-dependent editing activities. One activity is designated as 'pretransfer' editing and involves the hydrolysis of activated Val-AMP. The other activity is designated 'posttransfer' editing and involves deacylation of mischarged Val-tRNA(Ile). In Francisella tularensis subsp. tularensis (strain SCHU S4 / Schu 4), this protein is Isoleucine--tRNA ligase.